The sequence spans 492 residues: Ketol-acid reductoisomerase (NADP(+)) (492 aa).

One can recognise a KARI N-terminal Rossmann domain in the interval Ala-15 to Ser-208. NADP(+)-binding positions include Cys-45–Gln-48, Arg-68, Arg-76, Ser-78, and Asp-108–Gln-110. The active site involves His-132. Residue Gly-158 coordinates NADP(+). KARI C-terminal knotted domains lie at Ser-209–Gln-344 and Phe-345–Met-485. 4 residues coordinate Mg(2+): Asp-217, Glu-221, Glu-389, and Glu-393. Ser-414 serves as a coordination point for substrate.

The protein belongs to the ketol-acid reductoisomerase family. Mg(2+) serves as cofactor.

It carries out the reaction (2R)-2,3-dihydroxy-3-methylbutanoate + NADP(+) = (2S)-2-acetolactate + NADPH + H(+). The catalysed reaction is (2R,3R)-2,3-dihydroxy-3-methylpentanoate + NADP(+) = (S)-2-ethyl-2-hydroxy-3-oxobutanoate + NADPH + H(+). The protein operates within amino-acid biosynthesis; L-isoleucine biosynthesis; L-isoleucine from 2-oxobutanoate: step 2/4. Its pathway is amino-acid biosynthesis; L-valine biosynthesis; L-valine from pyruvate: step 2/4. In terms of biological role, involved in the biosynthesis of branched-chain amino acids (BCAA). Catalyzes an alkyl-migration followed by a ketol-acid reduction of (S)-2-acetolactate (S2AL) to yield (R)-2,3-dihydroxy-isovalerate. In the isomerase reaction, S2AL is rearranged via a Mg-dependent methyl migration to produce 3-hydroxy-3-methyl-2-ketobutyrate (HMKB). In the reductase reaction, this 2-ketoacid undergoes a metal-dependent reduction by NADPH to yield (R)-2,3-dihydroxy-isovalerate. This Yersinia enterocolitica serotype O:8 / biotype 1B (strain NCTC 13174 / 8081) protein is Ketol-acid reductoisomerase (NADP(+)).